The primary structure comprises 20 residues: Citrate synthase (20 aa).

Belongs to the citrate synthase family. In terms of assembly, homodimer.

It catalyses the reaction oxaloacetate + acetyl-CoA + H2O = citrate + CoA + H(+). It functions in the pathway carbohydrate metabolism; tricarboxylic acid cycle; isocitrate from oxaloacetate: step 1/2. The sequence is that of Citrate synthase from Populus euphratica (Euphrates poplar).